The chain runs to 471 residues: Methylenetetrahydrofolate--tRNA-(uracil-5-)-methyltransferase TrmFO (471 aa).

An FAD-binding site is contributed by 13–18 (GGGLAG).

The protein belongs to the MnmG family. TrmFO subfamily. FAD is required as a cofactor.

The protein resides in the cytoplasm. The enzyme catalyses uridine(54) in tRNA + (6R)-5,10-methylene-5,6,7,8-tetrahydrofolate + NADH + H(+) = 5-methyluridine(54) in tRNA + (6S)-5,6,7,8-tetrahydrofolate + NAD(+). It catalyses the reaction uridine(54) in tRNA + (6R)-5,10-methylene-5,6,7,8-tetrahydrofolate + NADPH + H(+) = 5-methyluridine(54) in tRNA + (6S)-5,6,7,8-tetrahydrofolate + NADP(+). Its function is as follows. Catalyzes the folate-dependent formation of 5-methyl-uridine at position 54 (M-5-U54) in all tRNAs. The protein is Methylenetetrahydrofolate--tRNA-(uracil-5-)-methyltransferase TrmFO of Azorhizobium caulinodans (strain ATCC 43989 / DSM 5975 / JCM 20966 / LMG 6465 / NBRC 14845 / NCIMB 13405 / ORS 571).